The sequence spans 427 residues: Adenylosuccinate synthetase (427 aa).

GTP-binding positions include 13-19 (GDEGKGK) and 41-43 (GHT). The active-site Proton acceptor is D14. Residues D14 and G41 each coordinate Mg(2+). IMP is bound by residues 14-17 (DEGK), 39-42 (NAGH), T129, R143, Q224, T239, and R303. H42 functions as the Proton donor in the catalytic mechanism. Residues 117–137 (QEKQRGEESLGTTKRGIGPAY) are disordered. 299–305 (TTTGRPR) is a substrate binding site. Residues R305, 331–333 (KLD), and 414–416 (GTG) contribute to the GTP site.

Belongs to the adenylosuccinate synthetase family. In terms of assembly, homodimer. Mg(2+) serves as cofactor.

The protein resides in the cytoplasm. The catalysed reaction is IMP + L-aspartate + GTP = N(6)-(1,2-dicarboxyethyl)-AMP + GDP + phosphate + 2 H(+). It functions in the pathway purine metabolism; AMP biosynthesis via de novo pathway; AMP from IMP: step 1/2. Its function is as follows. Plays an important role in the de novo pathway of purine nucleotide biosynthesis. Catalyzes the first committed step in the biosynthesis of AMP from IMP. The polypeptide is Adenylosuccinate synthetase (Caldicellulosiruptor saccharolyticus (strain ATCC 43494 / DSM 8903 / Tp8T 6331)).